Reading from the N-terminus, the 670-residue chain is DNA ligase (670 aa).

Residues 32 to 36, 81 to 82, and glutamate 113 each bind NAD(+); these read DAEYD and SL. Residue lysine 115 is the N6-AMP-lysine intermediate of the active site. The NAD(+) site is built by arginine 136, glutamate 173, lysine 290, and lysine 314. Positions 408, 411, 426, and 432 each coordinate Zn(2+). The 79-residue stretch at 592–670 folds into the BRCT domain; that stretch reads EIDSPFAGKT…EAEMIRLLGE (79 aa).

It belongs to the NAD-dependent DNA ligase family. LigA subfamily. Mg(2+) serves as cofactor. Requires Mn(2+) as cofactor.

It carries out the reaction NAD(+) + (deoxyribonucleotide)n-3'-hydroxyl + 5'-phospho-(deoxyribonucleotide)m = (deoxyribonucleotide)n+m + AMP + beta-nicotinamide D-nucleotide.. Its function is as follows. DNA ligase that catalyzes the formation of phosphodiester linkages between 5'-phosphoryl and 3'-hydroxyl groups in double-stranded DNA using NAD as a coenzyme and as the energy source for the reaction. It is essential for DNA replication and repair of damaged DNA. The polypeptide is DNA ligase (Yersinia pseudotuberculosis serotype O:1b (strain IP 31758)).